Reading from the N-terminus, the 170-residue chain is Protein GrpE (170 aa).

Positions 1–29 (MSEEIKNEEIVEEVEATEEVVETPEKSEL) are disordered. The span at 10 to 22 (IVEEVEATEEVVE) shows a compositional bias: acidic residues.

The protein belongs to the GrpE family. Homodimer.

Its subcellular location is the cytoplasm. In terms of biological role, participates actively in the response to hyperosmotic and heat shock by preventing the aggregation of stress-denatured proteins, in association with DnaK and GrpE. It is the nucleotide exchange factor for DnaK and may function as a thermosensor. Unfolded proteins bind initially to DnaJ; upon interaction with the DnaJ-bound protein, DnaK hydrolyzes its bound ATP, resulting in the formation of a stable complex. GrpE releases ADP from DnaK; ATP binding to DnaK triggers the release of the substrate protein, thus completing the reaction cycle. Several rounds of ATP-dependent interactions between DnaJ, DnaK and GrpE are required for fully efficient folding. In Streptococcus suis (strain 98HAH33), this protein is Protein GrpE.